A 499-amino-acid chain; its full sequence is Tyrosine-protein kinase Blk (499 aa).

A disordered region spans residues 1–34 (MGLLSSKRQVSEKGKGWSPVKIRTQDKAPPPLPP). A lipid anchor (N-myristoyl glycine) is attached at glycine 2. An SH3 domain is found at 52–112 (EEERFVVALF…PSNFVAPVET (61 aa)). The SH2 domain occupies 118–214 (WFFRTISRKD…GLCQKLTLPC (97 aa)). A Protein kinase domain is found at 235-488 (LKLVRKLGSG…FLQSVLEDFY (254 aa)). ATP is bound by residues 241 to 249 (LGSGQFGEV) and lysine 263. Aspartate 354 (proton acceptor) is an active-site residue. Position 383 is a phosphotyrosine; by autocatalysis (tyrosine 383).

The protein belongs to the protein kinase superfamily. Tyr protein kinase family. SRC subfamily. Interacts with CBL (via SH2 domain). Interacts with CD79A and CD79B (via SH2 domain). In terms of processing, phosphorylated on tyrosine residues after antibody-mediated surface engagement of the B-cell antigen receptor (BCR). Ubiquitination of activated BLK by the UBE3A ubiquitin protein ligase leads to its degradation by the ubiquitin-proteasome pathway. Expressed in immature Vgamma2 gamma-delta T-cells (at protein level). Expressed in the B-cell lineage.

The protein resides in the cell membrane. The enzyme catalyses L-tyrosyl-[protein] + ATP = O-phospho-L-tyrosyl-[protein] + ADP + H(+). With respect to regulation, antibody-mediated surface engagement of the B-cell antigen receptor (BCR) which results in the phosphorylation of BLK on tyrosine residues, stimulates the enzymatic activity. Its function is as follows. Non-receptor tyrosine kinase involved in B-lymphocyte development, differentiation and signaling. B-cell receptor (BCR) signaling requires a tight regulation of several protein tyrosine kinases and phosphatases, and associated coreceptors. Binding of antigen to the B-cell antigen receptor (BCR) triggers signaling that ultimately leads to B-cell activation. Signaling through BLK plays an important role in transmitting signals through surface immunoglobulins and supports the pro-B to pre-B transition, as well as the signaling for growth arrest and apoptosis downstream of B-cell receptor. Specifically binds and phosphorylates CD79A at 'Tyr-188'and 'Tyr-199', as well as CD79B at 'Tyr-196' and 'Tyr-207'. Also phosphorylates the immunoglobulin G receptor FCGR2. With FYN and LYN, plays an essential role in pre-B-cell receptor (pre-BCR)-mediated NF-kappa-B activation. Also contributes to BTK activation by indirectly stimulating BTK intramolecular autophosphorylation. In pancreatic islets, acts as a modulator of beta-cells function through the up-regulation of PDX1 and NKX6-1 and consequent stimulation of insulin secretion in response to glucose. Phosphorylates CGAS, promoting retention of CGAS in the cytosol. The sequence is that of Tyrosine-protein kinase Blk (Blk) from Mus musculus (Mouse).